The chain runs to 503 residues: Cobyric acid synthase (503 aa).

The GATase cobBQ-type domain maps to 255–444; the sequence is DIDIAVIRYP…FHDLFHNDAF (190 aa). Catalysis depends on Cys-337, which acts as the Nucleophile. Residue His-436 is part of the active site.

The protein belongs to the CobB/CobQ family. CobQ subfamily.

The protein operates within cofactor biosynthesis; adenosylcobalamin biosynthesis. Its function is as follows. Catalyzes amidations at positions B, D, E, and G on adenosylcobyrinic A,C-diamide. NH(2) groups are provided by glutamine, and one molecule of ATP is hydrogenolyzed for each amidation. The sequence is that of Cobyric acid synthase from Geobacillus sp. (strain WCH70).